A 313-amino-acid chain; its full sequence is uncharacterized protein (313 aa).

This is an uncharacterized protein from Orgyia pseudotsugata multicapsid polyhedrosis virus (OpMNPV).